The following is a 260-amino-acid chain: Dehydrogenase/reductase SDR family member 11 (260 aa).

A signal peptide spans 1–30; sequence MARPGMERWRDRLALVTGASGGIGAAVARA. NADP(+)-binding positions include 18 to 23, 43 to 44, Glu49, 70 to 71, and Asn97; these read GASGGI, RT, and DL. Substrate is bound by residues Ser151 and Tyr166. Residues Tyr166, Lys170, 201–204, and Lys208 each bind NADP(+); that span reads VETQ. Residue Tyr166 is the Proton acceptor of the active site.

This sequence belongs to the short-chain dehydrogenases/reductases (SDR) family. Homotetramer. In terms of tissue distribution, isoform 1: Ubiquitously expressed, with highest levels in testis, small intestine, colon, kidney, brain and heart. Isoform 3: Expressed in brain, heart and skeletal muscle.

It is found in the secreted. It catalyses the reaction a 3beta-hydroxysteroid + NADP(+) = a 3-oxosteroid + NADPH + H(+). The enzyme catalyses 17beta-estradiol + NAD(+) = estrone + NADH + H(+). The catalysed reaction is 17beta-estradiol + NADP(+) = estrone + NADPH + H(+). Its pathway is steroid biosynthesis; estrogen biosynthesis. Inhibited by flavonoids including apigenin, luteolin, genistein, kaempferol and quercetin and also by carbenoxolone, zearalenone, glycyrrhetinic, curcumin and flufenamic acid. Catalyzes the conversion of the 17-keto group of estrone, 4- and 5-androstenes and 5-alpha-androstanes into their 17-beta-hydroxyl metabolites and the conversion of the 3-keto group of 3-, 3,17- and 3,20- diketosteroids into their 3-hydroxyl metabolites. Exhibits reductive 3-beta-hydroxysteroid dehydrogenase activity toward 5-beta-androstanes, 5-beta-pregnanes, 4-pregnenes and bile acids. May also reduce endogenous and exogenous alpha-dicarbonyl compounds and xenobiotic alicyclic ketones. In Homo sapiens (Human), this protein is Dehydrogenase/reductase SDR family member 11 (DHRS11).